The following is a 495-amino-acid chain: ATP synthase subunit beta, chloroplastic (495 aa).

172–179 (GGAGVGKT) lines the ATP pocket.

The protein belongs to the ATPase alpha/beta chains family. In terms of assembly, F-type ATPases have 2 components, CF(1) - the catalytic core - and CF(0) - the membrane proton channel. CF(1) has five subunits: alpha(3), beta(3), gamma(1), delta(1), epsilon(1). CF(0) has four main subunits: a(1), b(1), b'(1) and c(9-12).

The protein resides in the plastid. Its subcellular location is the chloroplast thylakoid membrane. The enzyme catalyses ATP + H2O + 4 H(+)(in) = ADP + phosphate + 5 H(+)(out). Produces ATP from ADP in the presence of a proton gradient across the membrane. The catalytic sites are hosted primarily by the beta subunits. In Scilla messeniaca (Greek squill), this protein is ATP synthase subunit beta, chloroplastic.